We begin with the raw amino-acid sequence, 252 residues long: MILYEYPFNERIRTLLRLEDLFDRLEYFLGQDHAHQHHVALTTLFEIIDVAGRADLKTDLIKELERQRQALAPLRANPQIDQEALDAVIGEIEQGIAMLNQTVGKAGQLLADNEWLTSIRSRAIIPGGTCEFDLPAYYAWQHRPAEDRRADILKWVRPLLSLRMGTTIVLRLLREAGQSGKVIATGGSYQQMLSGRSYQLMQVYLDDSLLAFIPEMSANKYMLWVRFTQQDGDLRPRSVDADIPFLLKLCNF.

This sequence belongs to the ZapD family. In terms of assembly, interacts with FtsZ.

It localises to the cytoplasm. Cell division factor that enhances FtsZ-ring assembly. Directly interacts with FtsZ and promotes bundling of FtsZ protofilaments, with a reduction in FtsZ GTPase activity. The protein is Cell division protein ZapD of Cupriavidus necator (strain ATCC 17699 / DSM 428 / KCTC 22496 / NCIMB 10442 / H16 / Stanier 337) (Ralstonia eutropha).